A 254-amino-acid chain; its full sequence is Short-chain dehydrogenase/reductase SDRA (254 aa).

15 to 39 is an NADP(+) binding site; that stretch reads IVTASTQGIGFGITERFGLEGASVV. Residue Ser-146 coordinates substrate. Tyr-159 acts as the Proton acceptor in catalysis. The short motif at 252–254 is the Microbody targeting signal element; that stretch reads SRL.

The protein belongs to the short-chain dehydrogenases/reductases (SDR) family.

The protein resides in the peroxisome. In terms of biological role, involved with IBR3 and IBR10 in the peroxisomal beta-oxidation of indole-3-butyric acid (IBA) to form indole-3-acetic acid (IAA), a biologically active auxin. May be responsible for catalyzing the dehydrogenation step in the conversion of IBA. May be involved in the peroxisomal activation of 2,4-dichlorophenoxybutyric acid (2,4-DB), a precursor of active auxins that inhibit root growth. In Arabidopsis thaliana (Mouse-ear cress), this protein is Short-chain dehydrogenase/reductase SDRA.